Reading from the N-terminus, the 206-residue chain is Small ribosomal subunit protein uS4 (206 aa).

The region spanning 96–156 (GRLDNVVYRM…EKSKKQARIK (61 aa)) is the S4 RNA-binding domain.

It belongs to the universal ribosomal protein uS4 family. As to quaternary structure, part of the 30S ribosomal subunit. Contacts protein S5. The interaction surface between S4 and S5 is involved in control of translational fidelity.

Functionally, one of the primary rRNA binding proteins, it binds directly to 16S rRNA where it nucleates assembly of the body of the 30S subunit. Its function is as follows. With S5 and S12 plays an important role in translational accuracy. This is Small ribosomal subunit protein uS4 from Actinobacillus succinogenes (strain ATCC 55618 / DSM 22257 / CCUG 43843 / 130Z).